Reading from the N-terminus, the 312-residue chain is D-alanine--D-alanine ligase (312 aa).

The region spanning 99–304 (KKILKAEGIP…FEDLVEKILM (206 aa)) is the ATP-grasp domain. 131-186 (LQTLKLPVVIKAPREGSTIGIEFVFSKQELPKAIKKVLEIDKQLLVEEFIEGVEVT) contacts ATP. Residues Asp-257, Glu-271, and Asn-273 each coordinate Mg(2+).

The protein belongs to the D-alanine--D-alanine ligase family. It depends on Mg(2+) as a cofactor. Mn(2+) is required as a cofactor.

The protein resides in the cytoplasm. It carries out the reaction 2 D-alanine + ATP = D-alanyl-D-alanine + ADP + phosphate + H(+). It participates in cell wall biogenesis; peptidoglycan biosynthesis. Its function is as follows. Cell wall formation. This is D-alanine--D-alanine ligase from Carboxydothermus hydrogenoformans (strain ATCC BAA-161 / DSM 6008 / Z-2901).